The chain runs to 496 residues: Lysine--tRNA ligase (496 aa).

Positions 408 and 415 each coordinate Mg(2+).

This sequence belongs to the class-II aminoacyl-tRNA synthetase family. As to quaternary structure, homodimer. Requires Mg(2+) as cofactor.

It is found in the cytoplasm. The catalysed reaction is tRNA(Lys) + L-lysine + ATP = L-lysyl-tRNA(Lys) + AMP + diphosphate. In Legionella pneumophila (strain Lens), this protein is Lysine--tRNA ligase.